A 227-amino-acid chain; its full sequence is Large ribosomal subunit protein uL3 (227 aa).

Glutamine 154 is subject to N5-methylglutamine.

Belongs to the universal ribosomal protein uL3 family. In terms of assembly, part of the 50S ribosomal subunit. Forms a cluster with proteins L14 and L19. Post-translationally, methylated by PrmB.

One of the primary rRNA binding proteins, it binds directly near the 3'-end of the 23S rRNA, where it nucleates assembly of the 50S subunit. This is Large ribosomal subunit protein uL3 from Acidiphilium cryptum (strain JF-5).